A 926-amino-acid polypeptide reads, in one-letter code: Beta-mannosidase A (926 aa).

A signal peptide spans 1–21; the sequence is MHVKAETVLALLTPAPPSVVG. 5 N-linked (GlcNAc...) asparagine glycosylation sites follow: Asn40, Asn242, Asn277, Asn311, and Asn342. The active-site Proton donor is the Glu474. 10 N-linked (GlcNAc...) asparagine glycosylation sites follow: Asn532, Asn603, Asn626, Asn653, Asn733, Asn756, Asn785, Asn793, Asn819, and Asn905.

Belongs to the glycosyl hydrolase 2 family. Beta-mannosidase A subfamily. In terms of assembly, homodimer.

Its subcellular location is the secreted. The catalysed reaction is Hydrolysis of terminal, non-reducing beta-D-mannose residues in beta-D-mannosides.. It functions in the pathway glycan metabolism; N-glycan degradation. Functionally, exoglycosidase that cleaves the single beta-linked mannose residue from the non-reducing end of beta-mannosidic oligosaccharides of various complexity and length. Involved in the degradation of polymeric mannan and galactomannan. In Aspergillus fumigatus (strain ATCC MYA-4609 / CBS 101355 / FGSC A1100 / Af293) (Neosartorya fumigata), this protein is Beta-mannosidase A (mndA).